Here is an 825-residue protein sequence, read N- to C-terminus: Glycerol-3-phosphate acyltransferase 1, mitochondrial (825 aa).

Over 1 to 87 (MDESALTLGT…FFNPSIPSLG (87 aa)) the chain is Cytoplasmic. The interval 80–120 (NPSIPSLGLRNVIYINETHTRHRGWLARRLSYVLFIQERDV) is important for mitochondrial localization. An intramembrane segment occupies 88–118 (LRNVIYINETHTRHRGWLARRLSYVLFIQER). Residues 119–825 (DVHKGMFATN…LEYILSLVVL (707 aa)) lie on the Cytoplasmic side of the membrane. The HXXXXD motif signature appears at 230–235 (HRSHID). Residues Arg-278, Arg-279, Lys-288, Arg-293, and Arg-328 each coordinate CoA. At Ser-380 the chain carries Phosphoserine. A disordered region spans residues 435–455 (SRPSGAADEGTDMSINESRNA). A CoA-binding site is contributed by Arg-461. A phosphoserine mark is found at Ser-685 and Ser-692. Lys-777 and Lys-781 each carry N6-acetyllysine.

It belongs to the GPAT/DAPAT family. Highly expressed in adipose tissues and lung. Low expression in liver.

The protein resides in the mitochondrion outer membrane. It catalyses the reaction sn-glycerol 3-phosphate + an acyl-CoA = a 1-acyl-sn-glycero-3-phosphate + CoA. The enzyme catalyses (9Z,12Z)-octadecadienoyl-CoA + sn-glycerol 3-phosphate = 1-(9Z,12Z)-octadecadienoyl-sn-glycero-3-phosphate + CoA. The catalysed reaction is sn-glycerol 3-phosphate + (9Z)-octadecenoyl-CoA = 1-(9Z-octadecenoyl)-sn-glycero-3-phosphate + CoA. It carries out the reaction sn-glycerol 3-phosphate + octadecanoyl-CoA = 1-octadecanoyl-sn-glycero-3-phosphate + CoA. It catalyses the reaction sn-glycerol 3-phosphate + hexadecanoyl-CoA = 1-hexadecanoyl-sn-glycero-3-phosphate + CoA. The enzyme catalyses dodecanoyl-CoA + sn-glycerol 3-phosphate = 1-dodecanoyl-sn-glycerol 3-phosphate + CoA. The catalysed reaction is 1-acyl-sn-glycero-3-phospho-(1'-sn-glycerol) + an acyl-CoA = a 1,2-diacyl-sn-glycero-3-phospho-(1'-sn-glycerol) + CoA. It functions in the pathway phospholipid metabolism; CDP-diacylglycerol biosynthesis; CDP-diacylglycerol from sn-glycerol 3-phosphate: step 1/3. Mitochondrial membrane protein that catalyzes the essential first step of biosynthesis of glycerolipids such as triglycerides, phosphatidic acids and lysophosphatidic acids. Esterifies acyl-group from acyl-coenzyme A (acyl-CoA) to the sn-1 position of glycerol-3-phosphate, to produce lysophosphatidic acid. Has a narrow hydrophobic binding cleft that selects for a linear acyl chain. Catalytic activity is higher for substrates with a 16-carbon acyl chain. The sequence is that of Glycerol-3-phosphate acyltransferase 1, mitochondrial from Bos taurus (Bovine).